The primary structure comprises 453 residues: Aspartate aminotransferase, chloroplastic (453 aa).

The N-terminal 44 residues, 1 to 44, are a transit peptide targeting the chloroplast; that stretch reads MASLMLSLGSTSLLPREINKDKLKLGTSASNPFLKAKSFSRVTM. L-aspartate contacts are provided by G85, W181, and N234. Residue K298 is modified to N6-(pyridoxal phosphate)lysine. R427 lines the L-aspartate pocket.

This sequence belongs to the class-I pyridoxal-phosphate-dependent aminotransferase family. Homodimer. The cofactor is pyridoxal 5'-phosphate.

It localises to the plastid. It is found in the chloroplast. The protein resides in the amyloplast. The enzyme catalyses L-aspartate + 2-oxoglutarate = oxaloacetate + L-glutamate. Functionally, amino acid aminotransferase important for the metabolism of amino acids and Krebs-cycle related organic acids. No activity with D-Asp or D-Ala as amino donors. In plants, it is involved in nitrogen metabolism and in aspects of carbon and energy metabolism. In Arabidopsis thaliana (Mouse-ear cress), this protein is Aspartate aminotransferase, chloroplastic (ASP5).